The following is a 246-amino-acid chain: UDP-N-acetyl-D-mannosaminuronic acid transferase (246 aa).

Belongs to the glycosyltransferase 26 family.

It carries out the reaction UDP-N-acetyl-alpha-D-mannosaminouronate + N-acetyl-alpha-D-glucosaminyl-di-trans,octa-cis-undecaprenyl diphosphate = beta-D-ManNAcA-(1-&gt;4)-alpha-D-GlcNAc-di-trans,octa-cis-undecaprenyl diphosphate + UDP + H(+). It functions in the pathway bacterial outer membrane biogenesis; enterobacterial common antigen biosynthesis. Catalyzes the synthesis of Und-PP-GlcNAc-ManNAcA (Lipid II), the second lipid-linked intermediate involved in enterobacterial common antigen (ECA) synthesis. This is UDP-N-acetyl-D-mannosaminuronic acid transferase from Escherichia coli O127:H6 (strain E2348/69 / EPEC).